We begin with the raw amino-acid sequence, 20 residues long: Agglutinin beta-2 chain (20 aa).

The interval 1-20 (GRNGKSQSIIVGPWGDRVTN) is disordered.

The protein belongs to the jacalin lectin family. Formed of four alpha chains and four beta chains.

Its function is as follows. D-galactose-specific lectin, binds the T-antigen structure Gal-beta1,3-GalNAc. The chain is Agglutinin beta-2 chain from Maclura pomifera (Osage orange).